Here is a 248-residue protein sequence, read N- to C-terminus: DNA polymerase sliding clamp 2 (248 aa).

The protein belongs to the PCNA family. In terms of assembly, the subunits circularize to form a toroid; DNA passes through its center. Replication factor C (RFC) is required to load the toroid on the DNA. Forms a dimeric complex with PCNA3 and trimeric complexes PCNA123 and PCNA323; does not form homotrimers. Crystal structures show a heterotetramer of 2 PCNA2 and 2 PCNA3, which would be large enough to clamp a Holliday junction.

Functionally, sliding clamp subunit that acts as a moving platform for DNA processing. Responsible for tethering the catalytic subunit of DNA polymerase and other proteins to DNA during high-speed replication. Both trimeric complexes inhibit DNA ligase and both 3'-5' and 5'-3' activity of Hel308 (Hjm) helicase, but stimulate Hjc, the Holliday junction cleavage enzyme. The protein is DNA polymerase sliding clamp 2 of Sulfurisphaera tokodaii (strain DSM 16993 / JCM 10545 / NBRC 100140 / 7) (Sulfolobus tokodaii).